The chain runs to 280 residues: F-box only protein 27 (280 aa).

The region spanning 20–67 (VLDLSRLPPELLLLVLSHVPPRTLLMHCRRVCRAWRALVDGQALWLLL) is the F-box domain. Residues 101–277 (FCALRPLGRN…VTNSSVIIRV (177 aa)) form the FBA domain.

As to quaternary structure, part of a SCF (SKP1-cullin-F-box) protein ligase complex. Interacts with SKP1 and CUL1. As to expression, detected in brain, heart and muscle.

Its function is as follows. Substrate-recognition component of the SCF (SKP1-CUL1-F-box protein)-type E3 ubiquitin ligase complex. Able to recognize and bind complex-type oligosaccharides. The protein is F-box only protein 27 (Fbxo27) of Mus musculus (Mouse).